The primary structure comprises 870 residues: Radial spoke head 10 homolog B2 (870 aa).

The span at 1–16 (MVKEKKKADKKGEKSA) shows a compositional bias: basic and acidic residues. The disordered stretch occupies residues 1–44 (MVKEKKKADKKGEKSARSPSSLSDNLDFSKQDGNTTRQEMSPAG). Residues 17 to 39 (RSPSSLSDNLDFSKQDGNTTRQE) show a composition bias toward polar residues. 10 MORN repeats span residues 86–108 (YEGE…GGCT), 109–131 (YRGM…DGLK), 132–154 (YEGD…DGSM), 155–177 (YEGE…TQPV), 179–201 (YIGH…QEGT), 204–226 (YEGD…SGNI), 227–249 (YEGQ…TTNE), 251–273 (YTGR…LKRI), 284–306 (YIGE…SGAM), and 307–329 (YDGE…NGRV). Positions 674–704 (NKSPSAVMSHESDAAHSDSARSSSSKLELSP) are disordered. Over residues 683 to 692 (HESDAAHSDS) the composition is skewed to basic and acidic residues. The segment covering 693 to 703 (ARSSSSKLELS) has biased composition (low complexity). Residues 784–811 (KEKIRADRLRSTAQAQQRKMEDDELEAR) are a coiled coil. Residues 840–870 (VSSSHLILDPPKEDVTVSPSSKTITSKKKKK) form a disordered region.

In terms of assembly, interacts with RSPH6A. Does not appear to be part of the axonemal radial spoke complexes 1 or 2.

Its subcellular location is the cytoplasm. The protein resides in the cytoskeleton. It is found in the cilium axoneme. The protein localises to the cell projection. It localises to the cilium. Its subcellular location is the flagellum. Its function is as follows. May function as part of the axonemal radial spoke complex 3 (RS3). Radial spoke complexes are important for ciliary motility. The polypeptide is Radial spoke head 10 homolog B2 (RSPH10B2) (Homo sapiens (Human)).